Consider the following 544-residue polypeptide: Zinc finger protein 502 (544 aa).

Residue Lys-43 forms a Glycyl lysine isopeptide (Lys-Gly) (interchain with G-Cter in SUMO2) linkage. C2H2-type zinc fingers lie at residues 155 to 177, 183 to 205, 211 to 233, 239 to 261, 267 to 289, 295 to 317, 323 to 345, 351 to 373, 379 to 401, 407 to 429, 435 to 457, 463 to 485, 491 to 513, and 519 to 541; these read WKCN…QRTH, YTCE…QRIH, YGCE…QRIH, YKCN…QRIH, YICS…QRIH, HKCD…QRIH, YKCK…QRIH, YKCS…QRSH, YKCN…MRIH, YKCK…HRTH, YKCS…YRIH, and YECI…QKLH.

It belongs to the krueppel C2H2-type zinc-finger protein family. As to quaternary structure, (Microbial infection) Interacts with human respiratory syncytial virus (HRSV) matrix protein; this interaction probably facilitates viral release.

It is found in the nucleus. May be involved in transcriptional regulation. The chain is Zinc finger protein 502 (ZNF502) from Homo sapiens (Human).